The chain runs to 235 residues: DnaA regulatory inactivator Hda (235 aa).

Belongs to the DnaA family. HdA subfamily. As to quaternary structure, the active form seems to be an ADP-bound monomer. Forms the RIDA complex (regulatory inactivation of DnaA) of ATP-DnaA, ADP-Hda and the DNA-loaded beta sliding clamp (dnaN).

Mediates the interaction of DNA replication initiator protein DnaA with DNA polymerase subunit beta sliding clamp (dnaN). Stimulates hydrolysis of ATP-DnaA to ADP-DnaA, rendering DnaA inactive for reinitiation, a process called regulatory inhibition of DnaA or RIDA. This is DnaA regulatory inactivator Hda from Yersinia pestis bv. Antiqua (strain Antiqua).